The sequence spans 203 residues: Glycerol-3-phosphate acyltransferase (203 aa).

The next 5 helical transmembrane spans lie at Val5–Val25, Lys55–Ala75, Phe88–Phe108, Val114–Val134, and Phe162–Ile182.

This sequence belongs to the PlsY family. Probably interacts with PlsX.

It is found in the cell inner membrane. It carries out the reaction an acyl phosphate + sn-glycerol 3-phosphate = a 1-acyl-sn-glycero-3-phosphate + phosphate. The protein operates within lipid metabolism; phospholipid metabolism. Functionally, catalyzes the transfer of an acyl group from acyl-phosphate (acyl-PO(4)) to glycerol-3-phosphate (G3P) to form lysophosphatidic acid (LPA). This enzyme utilizes acyl-phosphate as fatty acyl donor, but not acyl-CoA or acyl-ACP. In Anaeromyxobacter sp. (strain Fw109-5), this protein is Glycerol-3-phosphate acyltransferase.